The primary structure comprises 453 residues: Allantoinase (453 aa).

Residues His59, His61, Lys146, His186, His242, and Asp315 each coordinate Zn(2+). Residue Lys146 is modified to N6-carboxylysine.

Belongs to the metallo-dependent hydrolases superfamily. Allantoinase family. As to quaternary structure, homotetramer. Requires Zn(2+) as cofactor. Carboxylation allows a single lysine to coordinate two zinc ions.

The enzyme catalyses (S)-allantoin + H2O = allantoate + H(+). It functions in the pathway nitrogen metabolism; (S)-allantoin degradation; allantoate from (S)-allantoin: step 1/1. Functionally, catalyzes the conversion of allantoin (5-ureidohydantoin) to allantoic acid by hydrolytic cleavage of the five-member hydantoin ring. This is Allantoinase from Escherichia coli (strain K12 / MC4100 / BW2952).